The sequence spans 166 residues: Regulatory protein RecX (166 aa).

This sequence belongs to the RecX family.

The protein localises to the cytoplasm. Modulates RecA activity. The chain is Regulatory protein RecX from Salmonella paratyphi C (strain RKS4594).